The following is a 283-amino-acid chain: Polyamine aminopropyltransferase (283 aa).

A PABS domain is found at 5–238; the sequence is STWIDEYHKG…GIWSWTFASE (234 aa). Glutamine 32 contacts S-methyl-5'-thioadenosine. Residues histidine 63 and aspartate 87 each contribute to the spermidine site. S-methyl-5'-thioadenosine contacts are provided by residues glutamate 107 and 139-140; that span reads DG. Aspartate 158 (proton acceptor) is an active-site residue. Residue 158-161 coordinates spermidine; the sequence is DCSD.

Belongs to the spermidine/spermine synthase family. As to quaternary structure, homodimer or homotetramer.

The protein resides in the cytoplasm. It carries out the reaction S-adenosyl 3-(methylsulfanyl)propylamine + putrescine = S-methyl-5'-thioadenosine + spermidine + H(+). Its pathway is amine and polyamine biosynthesis; spermidine biosynthesis; spermidine from putrescine: step 1/1. Functionally, catalyzes the irreversible transfer of a propylamine group from the amino donor S-adenosylmethioninamine (decarboxy-AdoMet) to putrescine (1,4-diaminobutane) to yield spermidine. This Prochlorococcus marinus (strain MIT 9312) protein is Polyamine aminopropyltransferase.